The primary structure comprises 252 residues: Small ribosomal subunit protein uS2B (252 aa).

Position 2 is an N-acetylserine (Ser-2). Acidic residues-rich tracts occupy residues 213–229 (VAEEAAAAEEGEEEEVK) and 241–252 (EWAEENADNVEW). The segment at 213 to 252 (VAEEAAAAEEGEEEEVKEEVTEGQAEATEWAEENADNVEW) is disordered.

It belongs to the universal ribosomal protein uS2 family. In terms of assembly, component of the small ribosomal subunit. Mature ribosomes consist of a small (40S) and a large (60S) subunit. The 40S subunit contains about 33 different proteins and 1 molecule of RNA (18S). The 60S subunit contains about 49 different proteins and 3 molecules of RNA (25S, 5.8S and 5S). Interacts with RPS21.

The protein localises to the cytoplasm. Functionally, required for the assembly and/or stability of the 40S ribosomal subunit. Required for the processing of the 20S rRNA-precursor to mature 18S rRNA in a late step of the maturation of 40S ribosomal subunits. This is Small ribosomal subunit protein uS2B from Saccharomyces cerevisiae (strain RM11-1a) (Baker's yeast).